The chain runs to 118 residues: Large ribosomal subunit protein uL18 (118 aa).

It belongs to the universal ribosomal protein uL18 family. As to quaternary structure, part of the 50S ribosomal subunit; part of the 5S rRNA/L5/L18/L25 subcomplex. Contacts the 5S and 23S rRNAs.

Functionally, this is one of the proteins that bind and probably mediate the attachment of the 5S RNA into the large ribosomal subunit, where it forms part of the central protuberance. This is Large ribosomal subunit protein uL18 from Rickettsia prowazekii (strain Madrid E).